Reading from the N-terminus, the 2571-residue chain is Highly reducing polyketide synthase 19 (2571 aa).

The tract at residues 1-51 (MSPIFLGDSEDAATCRCGPPSSPSPELSGTETALTSDSDGPELLNPGPQGP) is disordered. Residues 27–38 (LSGTETALTSDS) show a composition bias toward polar residues. The Ketosynthase family 3 (KS3) domain maps to 51-485 (PEPIAIIGMG…GANAHCILES (435 aa)). Residues Cys-224, His-359, and His-398 each act as for beta-ketoacyl synthase activity in the active site. The segment at 609 to 932 (VFTGQGAQWA…PYNSALLRGK (324 aa)) is malonyl-CoA:ACP transacylase (MAT) domain. The active-site For malonyltransferase activity is the Ser-701. An N-terminal hotdog fold region spans residues 1019-1163 (HDLLGSRVPG…GLVKLTQNED (145 aa)). A dehydratase (DH) domain region spans residues 1019-1340 (HDLLGSRVPG…SGCRMVPYSS (322 aa)). Residues 1019-1344 (HDLLGSRVPG…MVPYSSGTAV (326 aa)) form the PKS/mFAS DH domain. The Proton acceptor; for dehydratase activity role is filled by His-1051. The tract at residues 1177–1344 (MEQSAPRTWY…MVPYSSGTAV (168 aa)) is C-terminal hotdog fold. The active-site Proton donor; for dehydratase activity is Asp-1241. An enoyl reductase (ER) domain region spans residues 1800–2140 (NMSDAFVFTR…AFRALSGSTT (341 aa)). The segment at 2177–2355 (SYLLVGCLGG…ATSVGLGMIS (179 aa)) is ketoreductase (KR) domain. The Carrier domain occupies 2490 to 2568 (AVAAQALELV…MLSELIAGKL (79 aa)). Residue Ser-2527 is modified to O-(pantetheine 4'-phosphoryl)serine.

The protein operates within polyketide biosynthesis. In terms of biological role, highly reducing polyketide synthase; part of the gene cluster that mediates the biosynthesis of pyriculol and pyriculariol, two heptaketides that induce lesion formation upon application on rice leaves but are dispensable for pathogenicity. The highly reducing polyketide synthase synthesizes the heptaketide backbone of pyriculol and pyriculariol. Pyriculol and pyriculariol contain several hydroxyl moieties and double bonds, so it can be assumed that several reduction steps occur during biosynthesis. These reactions could be executed by PKS19 itself or partly by the tailoring enzymes OXR1, PXR2, RED1, RED2 or RED3, identified within the cluster. The FAD-linked oxidoreductase OXR1 is the only tailoring enzyme for which the function has been determined yet, and is involved in the oxidation of dihydropyriculol and dihydropyriculariol into pyriculol and pyriculariol, respectively. This Pyricularia oryzae (strain 70-15 / ATCC MYA-4617 / FGSC 8958) (Rice blast fungus) protein is Highly reducing polyketide synthase 19.